Here is a 338-residue protein sequence, read N- to C-terminus: GTPase Obg (338 aa).

Positions 1–159 (MSFIDEVKIH…RWLRLELKLM (159 aa)) constitute an Obg domain. The OBG-type G domain maps to 160 to 331 (ADVGLLGMPS…LLDEIARNLW (172 aa)). Residues 166–173 (GMPSVGKS), 191–195 (FTTLK), 213–216 (DIPG), 283–286 (NKID), and 312–314 (SAA) contribute to the GTP site. S173 and T193 together coordinate Mg(2+).

It belongs to the TRAFAC class OBG-HflX-like GTPase superfamily. OBG GTPase family. As to quaternary structure, monomer. It depends on Mg(2+) as a cofactor.

Its subcellular location is the cytoplasm. In terms of biological role, an essential GTPase which binds GTP, GDP and possibly (p)ppGpp with moderate affinity, with high nucleotide exchange rates and a fairly low GTP hydrolysis rate. Plays a role in control of the cell cycle, stress response, ribosome biogenesis and in those bacteria that undergo differentiation, in morphogenesis control. This is GTPase Obg from Geotalea uraniireducens (strain Rf4) (Geobacter uraniireducens).